Here is a 103-residue protein sequence, read N- to C-terminus: ATP-dependent Clp protease adapter protein ClpS (103 aa).

It belongs to the ClpS family. Binds to the N-terminal domain of the chaperone ClpA.

Involved in the modulation of the specificity of the ClpAP-mediated ATP-dependent protein degradation. The sequence is that of ATP-dependent Clp protease adapter protein ClpS from Nitrosomonas eutropha (strain DSM 101675 / C91 / Nm57).